The following is a 322-amino-acid chain: N-acetyl-gamma-glutamyl-phosphate reductase (322 aa).

Cys132 is an active-site residue.

Belongs to the NAGSA dehydrogenase family. Type 1 subfamily.

It is found in the cytoplasm. The enzyme catalyses N-acetyl-L-glutamate 5-semialdehyde + phosphate + NADP(+) = N-acetyl-L-glutamyl 5-phosphate + NADPH + H(+). Its pathway is amino-acid biosynthesis; L-arginine biosynthesis; N(2)-acetyl-L-ornithine from L-glutamate: step 3/4. Catalyzes the NADPH-dependent reduction of N-acetyl-5-glutamyl phosphate to yield N-acetyl-L-glutamate 5-semialdehyde. This is N-acetyl-gamma-glutamyl-phosphate reductase from Bacteroides fragilis (strain ATCC 25285 / DSM 2151 / CCUG 4856 / JCM 11019 / LMG 10263 / NCTC 9343 / Onslow / VPI 2553 / EN-2).